We begin with the raw amino-acid sequence, 853 residues long: Dynein axonemal assembly factor 5 (853 aa).

Ala2 is subject to N-acetylalanine. 9 HEAT repeats span residues 69–107, 200–238, 240–276, 278–316, 374–412, 597–636, 694–732, 736–774, and 782–820; these read GPWARLLLPRLLRLLSDPAEGCRALAAHLLDLGLRRAAR, HMQSESLIGPLMQTISHQHWKVRVAVIEATGTVIQFGSG, SVDDVLSHFAQRLFDDVPQVRQAVTSVVGGWLLNLRD, YSFLHKLTPLLLSSFSDEMPEIRQTATSLWEKVGLQWQQ, RVKAAQLLPVLLLHAEDHITQHLEIVLRTLHQACTDEEK, GEALQHVIPTLRACLQPSTDPHMRLKLFSILSMMLLRPKD, QEAQETLMPQVLATLEDDSQTTRLMSCRIINMFLKNSGD, PEKFLKVYPELLKRLDDVSNDVRMAAASALLTWLKCIES, and QSSVQFLYRELLVHLDDPESAIQDTVLEVLKEGSVLFPD.

This sequence belongs to the DNAAF5 family. As to quaternary structure, interacts with DNAI2; probably involved in outer arm dynein assembly. As to expression, expressed in ciliated cells including ependymal cells lining the lateral ventricles and multiciliated epithelium of oviduct ampulla.

Its subcellular location is the cytoplasm. It localises to the cytoplasmic granule. In terms of biological role, cytoplasmic protein involved in the delivery of the dynein machinery to the motile cilium. It is required for the assembly of the axonemal dynein inner and outer arms, two structures attached to the peripheral outer doublet A microtubule of the axoneme, that play a crucial role in cilium motility. The protein is Dynein axonemal assembly factor 5 of Mus musculus (Mouse).